A 563-amino-acid polypeptide reads, in one-letter code: MPVTDAATEPAYTVGDYLLDRLAELGVSEIFGVPGDYNLEFLDHIVAHPRLRWVGNANELNAGYAADGYGRLRGMSALVTTFGVGELSAANAVAGSYAEQVPVVHIVGGPSKDAQGTRRALHHSLGDGDFEHFFRVSREITCAQANLMPATARREIDRVLSEVREQKRPGYILLSTDVARFPTEPPEAALPRYTGGTSPRALAMFTEAAAALIGEHRITVLADLLVHRLQAIKELEALLAADVVPHATLMWGKSLLDESSPNFLGIYAGSASAPAVRTAIEEAPVLVTAGVVFTDMVSGFFSQRIDPARTIDVGQYQSSVAGEVFAPLEMGEALQALAAILTRRGVSSPPVASPPAEPLPPPPPREQPLTQKMVWDRVCTALTPGNVVLADQGTSFYGMADHRLPQGVTFIGQPLWGSIGYTLPAALGAAVAHPDRRTVLLIGDGAAQLTVQELGTFAREGLSPVIVVVNNDGYTVERAIHGETAPYNDIVGWKWTEVPNSLGVTDHLAFRVQTYGELDDALTAAARHQDRMVLVEVVLPRLEIPRLLVELVRPTSPDGSPRR.

Residue glutamate 59 participates in thiamine diphosphate binding. Residues 348–367 (SPPVASPPAEPLPPPPPREQ) form a disordered region. Positions 351–366 (VASPPAEPLPPPPPRE) are enriched in pro residues. Positions 394-476 (TSFYGMADHR…VVVNNDGYTV (83 aa)) are thiamine pyrophosphate binding. Mg(2+) contacts are provided by aspartate 444, asparagine 471, and glycine 473.

The protein belongs to the TPP enzyme family. A metal cation serves as cofactor. Requires thiamine diphosphate as cofactor.

In terms of biological role, decarboxylates branched-chain and aromatic alpha-keto acids to aldehydes. The protein is Alpha-keto-acid decarboxylase (kdc) of Mycobacterium avium (strain 104).